Consider the following 355-residue polypeptide: Probable butyrate kinase (355 aa).

The protein belongs to the acetokinase family.

It localises to the cytoplasm. It carries out the reaction butanoate + ATP = butanoyl phosphate + ADP. This Clostridium botulinum (strain Eklund 17B / Type B) protein is Probable butyrate kinase.